Consider the following 572-residue polypeptide: Proline--tRNA ligase (572 aa).

Belongs to the class-II aminoacyl-tRNA synthetase family. ProS type 1 subfamily. In terms of assembly, homodimer.

The protein localises to the cytoplasm. The catalysed reaction is tRNA(Pro) + L-proline + ATP = L-prolyl-tRNA(Pro) + AMP + diphosphate. In terms of biological role, catalyzes the attachment of proline to tRNA(Pro) in a two-step reaction: proline is first activated by ATP to form Pro-AMP and then transferred to the acceptor end of tRNA(Pro). As ProRS can inadvertently accommodate and process non-cognate amino acids such as alanine and cysteine, to avoid such errors it has two additional distinct editing activities against alanine. One activity is designated as 'pretransfer' editing and involves the tRNA(Pro)-independent hydrolysis of activated Ala-AMP. The other activity is designated 'posttransfer' editing and involves deacylation of mischarged Ala-tRNA(Pro). The misacylated Cys-tRNA(Pro) is not edited by ProRS. The polypeptide is Proline--tRNA ligase (Photorhabdus laumondii subsp. laumondii (strain DSM 15139 / CIP 105565 / TT01) (Photorhabdus luminescens subsp. laumondii)).